The chain runs to 137 residues: Transcription antitermination protein NusB (137 aa).

This sequence belongs to the NusB family.

In terms of biological role, involved in transcription antitermination. Required for transcription of ribosomal RNA (rRNA) genes. Binds specifically to the boxA antiterminator sequence of the ribosomal RNA (rrn) operons. The chain is Transcription antitermination protein NusB from Proteus mirabilis (strain HI4320).